Reading from the N-terminus, the 433-residue chain is Trigger factor (433 aa).

The PPIase FKBP-type domain occupies 161-246; the sequence is EDRATIDFTG…LKKVEERELP (86 aa).

It belongs to the FKBP-type PPIase family. Tig subfamily.

Its subcellular location is the cytoplasm. The catalysed reaction is [protein]-peptidylproline (omega=180) = [protein]-peptidylproline (omega=0). Functionally, involved in protein export. Acts as a chaperone by maintaining the newly synthesized protein in an open conformation. Functions as a peptidyl-prolyl cis-trans isomerase. This is Trigger factor from Edwardsiella ictaluri (strain 93-146).